Here is a 299-residue protein sequence, read N- to C-terminus: Putative glycylpeptide N-tetradecanoyltransferase (299 aa).

This sequence belongs to the NMT family.

The enzyme catalyses N-terminal glycyl-[protein] + tetradecanoyl-CoA = N-tetradecanoylglycyl-[protein] + CoA + H(+). Its function is as follows. Adds a myristoyl group to the N-terminal glycine residue of certain proteins. This Amsacta moorei entomopoxvirus (AmEPV) protein is Putative glycylpeptide N-tetradecanoyltransferase.